Consider the following 102-residue polypeptide: Small ribosomal subunit protein uS10 (102 aa).

This sequence belongs to the universal ribosomal protein uS10 family. Part of the 30S ribosomal subunit.

In terms of biological role, involved in the binding of tRNA to the ribosomes. The sequence is that of Small ribosomal subunit protein uS10 from Rhodospirillum centenum (strain ATCC 51521 / SW).